The sequence spans 832 residues: DNA polymerase I, thermostable (832 aa).

The 5'-3' exonuclease domain occupies Arg175–Lys260. Residues Glu410–Glu832 are polymerase.

This sequence belongs to the DNA polymerase type-A family.

It catalyses the reaction DNA(n) + a 2'-deoxyribonucleoside 5'-triphosphate = DNA(n+1) + diphosphate. Functionally, in addition to polymerase activity, this DNA polymerase exhibits 5'-3' exonuclease activity. Unlikely to have 3'-5' exonuclease activity due to absence of a 3'-5' exonuclease domain. This chain is DNA polymerase I, thermostable (polA), found in Thermus aquaticus.